Here is a 293-residue protein sequence, read N- to C-terminus: Small ribosomal subunit protein uS5 (293 aa).

The tract at residues 1–55 (MADDAGAAGGPGGPGGPGLGGRGGFRGGFGSGLRGRGRGRGRGRGRGRGARGGKA) is disordered. Residue A2 is modified to N-acetylalanine. The span at 7–34 (AAGGPGGPGGPGLGGRGGFRGGFGSGLR) shows a compositional bias: gly residues. 14 tandem repeats follow at residues 9-11 (GGP), 12-14 (GGP), 15-17 (GGP), 22-25 (RGGF), 26-29 (RGGF), 34-35 (RG), 36-37 (RG), 38-39 (RG), 40-41 (RG), 42-43 (RG), 44-45 (RG), 46-47 (RG), 48-49 (RG), and 51-52 (RG). The tract at residues 9–17 (GGPGGPGGP) is 3 X 3 AA tandem repeats of G-G-P. The segment at 22–29 (RGGFRGGF) is 2 X 4 AA tandem repeats of R-G-G-F. The segment at 34–52 (RGRGRGRGRGRGRGRGARG) is 9 X 2 AA tandem repeats of R-G. A compositionally biased stretch (basic residues) spans 35–51 (GRGRGRGRGRGRGRGAR). Residues K54 and K58 each participate in a glycyl lysine isopeptide (Lys-Gly) (interchain with G-Cter in ubiquitin) cross-link. An S5 DRBM domain is found at 102 to 165 (LKDEVLKIMP…ILAKLSIVPV (64 aa)). T252 is modified (phosphothreonine). K263 bears the N6-acetyllysine mark. A Phosphoserine modification is found at S264. T270 bears the Phosphothreonine mark. Position 275 is an N6-acetyllysine; alternate (K275). K275 is covalently cross-linked (Glycyl lysine isopeptide (Lys-Gly) (interchain with G-Cter in SUMO1); alternate). K275 is covalently cross-linked (Glycyl lysine isopeptide (Lys-Gly) (interchain with G-Cter in SUMO2); alternate). K275 is covalently cross-linked (Glycyl lysine isopeptide (Lys-Gly) (interchain with G-Cter in ubiquitin); alternate). A Phosphoserine modification is found at S281.

Belongs to the universal ribosomal protein uS5 family. In terms of assembly, component of the small ribosomal subunit. Interacts with zinc finger protein ZNF277 (via zinc-finger domains); the interaction is direct; the interaction is extra-ribosomal. Interaction with ZNF277 competes with the binding of RPS2 to protein arginine methyltransferase PRMT3. In terms of processing, citrullinated by PADI4 in the Arg/Gly-rich region. Post-translationally, asymmetric arginine dimethylation by PRMT3 occurs at multiple sites in the Arg/Gly-rich region. Monoubiquitinated at Lys-54 and Lys-58 by RNF10 when a ribosome has stalled during translation, leading to its degradation by the proteasome. Deubiquitinated at Lys-54 and Lys-58 by USP10, preventing degradation by the proteasome and promoting 40S ribosome subunit recycling following ribosome dissociation.

It localises to the cytoplasm. It is found in the nucleus. Its subcellular location is the nucleolus. Functionally, component of the ribosome, a large ribonucleoprotein complex responsible for the synthesis of proteins in the cell. The small ribosomal subunit (SSU) binds messenger RNAs (mRNAs) and translates the encoded message by selecting cognate aminoacyl-transfer RNA (tRNA) molecules. The large subunit (LSU) contains the ribosomal catalytic site termed the peptidyl transferase center (PTC), which catalyzes the formation of peptide bonds, thereby polymerizing the amino acids delivered by tRNAs into a polypeptide chain. The nascent polypeptides leave the ribosome through a tunnel in the LSU and interact with protein factors that function in enzymatic processing, targeting, and the membrane insertion of nascent chains at the exit of the ribosomal tunnel. Plays a role in the assembly and function of the 40S ribosomal subunit. Mutations in this protein affects the control of translational fidelity. Involved in nucleolar processing of pre-18S ribosomal RNA and ribosome assembly. The polypeptide is Small ribosomal subunit protein uS5 (Rps2) (Rattus norvegicus (Rat)).